We begin with the raw amino-acid sequence, 153 residues long: Putative pre-16S rRNA nuclease (153 aa).

This sequence belongs to the YqgF nuclease family.

It localises to the cytoplasm. Its function is as follows. Could be a nuclease involved in processing of the 5'-end of pre-16S rRNA. The chain is Putative pre-16S rRNA nuclease from Prochlorococcus marinus (strain SARG / CCMP1375 / SS120).